Reading from the N-terminus, the 517-residue chain is ATP synthase subunit alpha (517 aa).

174–181 (GDRQTGKT) contacts ATP.

Belongs to the ATPase alpha/beta chains family. F-type ATPases have 2 components, CF(1) - the catalytic core - and CF(0) - the membrane proton channel. CF(1) has five subunits: alpha(3), beta(3), gamma(1), delta(1), epsilon(1). CF(0) has three main subunits: a(1), b(2) and c(9-12). The alpha and beta chains form an alternating ring which encloses part of the gamma chain. CF(1) is attached to CF(0) by a central stalk formed by the gamma and epsilon chains, while a peripheral stalk is formed by the delta and b chains.

The protein localises to the cell inner membrane. The enzyme catalyses ATP + H2O + 4 H(+)(in) = ADP + phosphate + 5 H(+)(out). Produces ATP from ADP in the presence of a proton gradient across the membrane. The alpha chain is a regulatory subunit. The protein is ATP synthase subunit alpha of Delftia acidovorans (strain DSM 14801 / SPH-1).